Reading from the N-terminus, the 89-residue chain is Large ribosomal subunit protein bL27 (89 aa).

The interval 1 to 26 is disordered; the sequence is MAHKKGVGSSRNGRDSESKRLGVKEG. Positions 12–26 are enriched in basic and acidic residues; that stretch reads NGRDSESKRLGVKEG.

It belongs to the bacterial ribosomal protein bL27 family.

This chain is Large ribosomal subunit protein bL27, found in Desulforamulus reducens (strain ATCC BAA-1160 / DSM 100696 / MI-1) (Desulfotomaculum reducens).